The primary structure comprises 299 residues: Diaminopimelate epimerase (299 aa).

Residues N13, Q46, and N66 each coordinate substrate. C75 serves as the catalytic Proton donor. Substrate contacts are provided by residues G76–N77, N166, N199, and E217–R218. Residue C226 is the Proton acceptor of the active site. G227 to T228 contributes to the substrate binding site.

This sequence belongs to the diaminopimelate epimerase family. In terms of assembly, homodimer.

It localises to the cytoplasm. The catalysed reaction is (2S,6S)-2,6-diaminopimelate = meso-2,6-diaminopimelate. Its pathway is amino-acid biosynthesis; L-lysine biosynthesis via DAP pathway; DL-2,6-diaminopimelate from LL-2,6-diaminopimelate: step 1/1. Catalyzes the stereoinversion of LL-2,6-diaminopimelate (L,L-DAP) to meso-diaminopimelate (meso-DAP), a precursor of L-lysine and an essential component of the bacterial peptidoglycan. This chain is Diaminopimelate epimerase, found in Paraburkholderia phytofirmans (strain DSM 17436 / LMG 22146 / PsJN) (Burkholderia phytofirmans).